The chain runs to 249 residues: Isoprenyl transferase (249 aa).

Asp25 is a catalytic residue. Asp25 contacts Mg(2+). Substrate-binding positions include 26 to 29, Trp30, Arg38, His42, and 70 to 72; these read GNGR and STE. Asn73 functions as the Proton acceptor in the catalytic mechanism. Substrate is bound by residues Trp74, Arg76, Arg197, and 203–205; that span reads RLS. Mg(2+) is bound at residue Glu216.

Belongs to the UPP synthase family. In terms of assembly, homodimer. It depends on Mg(2+) as a cofactor.

Catalyzes the condensation of isopentenyl diphosphate (IPP) with allylic pyrophosphates generating different type of terpenoids. This chain is Isoprenyl transferase, found in Streptococcus thermophilus (strain CNRZ 1066).